A 218-amino-acid polypeptide reads, in one-letter code: Probable 1-Cys peroxiredoxin (218 aa).

The Thioredoxin domain occupies 5–166; it reads WALGDLVPDI…VLRVLDSLQL (162 aa). Cysteine 47 functions as the Cysteine sulfenic acid (-SOH) intermediate in the catalytic mechanism.

The protein belongs to the peroxiredoxin family. Prx6 subfamily.

It is found in the nucleus. It localises to the cytoplasm. The enzyme catalyses a hydroperoxide + [thioredoxin]-dithiol = an alcohol + [thioredoxin]-disulfide + H2O. Functionally, thiol-specific peroxidase that catalyzes the reduction of hydrogen peroxide and organic hydroperoxides to water and alcohols, respectively. Seems to contribute to the inhibition of germination during stress. Associated with the rehydration events involved in the recovery of the desiccation-tolerant moss. The sequence is that of Probable 1-Cys peroxiredoxin from Syntrichia ruralis (Great hairy screw-moss).